A 431-amino-acid polypeptide reads, in one-letter code: Tol-Pal system protein TolB (431 aa).

An N-terminal signal peptide occupies residues 1–24 (MMKFLTRMLSAFAVLFFAISTAQA). The interval 318–340 (QVYRMSSSGGAASPVGGRGSAQI) is disordered. Over residues 323–332 (SSSGGAASPV) the composition is skewed to low complexity.

The protein belongs to the TolB family. In terms of assembly, the Tol-Pal system is composed of five core proteins: the inner membrane proteins TolA, TolQ and TolR, the periplasmic protein TolB and the outer membrane protein Pal. They form a network linking the inner and outer membranes and the peptidoglycan layer.

Its subcellular location is the periplasm. In terms of biological role, part of the Tol-Pal system, which plays a role in outer membrane invagination during cell division and is important for maintaining outer membrane integrity. This is Tol-Pal system protein TolB from Mannheimia succiniciproducens (strain KCTC 0769BP / MBEL55E).